The primary structure comprises 89 residues: Small ribosomal subunit protein uS15 (89 aa).

This sequence belongs to the universal ribosomal protein uS15 family. In terms of assembly, part of the 30S ribosomal subunit. Forms a bridge to the 50S subunit in the 70S ribosome, contacting the 23S rRNA.

One of the primary rRNA binding proteins, it binds directly to 16S rRNA where it helps nucleate assembly of the platform of the 30S subunit by binding and bridging several RNA helices of the 16S rRNA. Its function is as follows. Forms an intersubunit bridge (bridge B4) with the 23S rRNA of the 50S subunit in the ribosome. In Pseudomonas savastanoi pv. phaseolicola (strain 1448A / Race 6) (Pseudomonas syringae pv. phaseolicola (strain 1448A / Race 6)), this protein is Small ribosomal subunit protein uS15.